The following is a 360-amino-acid chain: Lipid-A-disaccharide synthase (360 aa).

Belongs to the LpxB family.

The catalysed reaction is a lipid X + a UDP-2-N,3-O-bis[(3R)-3-hydroxyacyl]-alpha-D-glucosamine = a lipid A disaccharide + UDP + H(+). Its pathway is bacterial outer membrane biogenesis; LPS lipid A biosynthesis. Its function is as follows. Condensation of UDP-2,3-diacylglucosamine and 2,3-diacylglucosamine-1-phosphate to form lipid A disaccharide, a precursor of lipid A, a phosphorylated glycolipid that anchors the lipopolysaccharide to the outer membrane of the cell. The sequence is that of Lipid-A-disaccharide synthase from Helicobacter pylori (strain P12).